Reading from the N-terminus, the 514-residue chain is 1-pyrroline-5-carboxylate dehydrogenase (514 aa).

Active-site residues include E286 and C320.

This sequence belongs to the aldehyde dehydrogenase family. RocA subfamily.

It carries out the reaction L-glutamate 5-semialdehyde + NAD(+) + H2O = L-glutamate + NADH + 2 H(+). Its pathway is amino-acid degradation; L-proline degradation into L-glutamate; L-glutamate from L-proline: step 2/2. This chain is 1-pyrroline-5-carboxylate dehydrogenase, found in Staphylococcus aureus (strain MSSA476).